The primary structure comprises 450 residues: Histidinol dehydrogenase (450 aa).

3 residues coordinate NAD(+): Tyr-135, Gln-197, and Asn-225. The substrate site is built by Thr-248, Gln-270, and His-273. The Zn(2+) site is built by Gln-270 and His-273. Active-site proton acceptor residues include Glu-339 and His-340. Positions 340, 373, 427, and 432 each coordinate substrate. Residue Asp-373 participates in Zn(2+) binding. His-432 contacts Zn(2+).

This sequence belongs to the histidinol dehydrogenase family. It depends on Zn(2+) as a cofactor.

The catalysed reaction is L-histidinol + 2 NAD(+) + H2O = L-histidine + 2 NADH + 3 H(+). It functions in the pathway amino-acid biosynthesis; L-histidine biosynthesis; L-histidine from 5-phospho-alpha-D-ribose 1-diphosphate: step 9/9. In terms of biological role, catalyzes the sequential NAD-dependent oxidations of L-histidinol to L-histidinaldehyde and then to L-histidine. In Corynebacterium jeikeium (strain K411), this protein is Histidinol dehydrogenase.